The following is a 336-amino-acid chain: Mitochondrial fission regulator 2 (336 aa).

A coiled-coil region spans residues 139–166 (QPDALLKISALEEELQRLRAQIATIITA). Positions 296-336 (HRQRDDSFGKENHSAEPSPFSSPDTPRIFQHTRRSQGRIHL) are disordered. Residues 297-309 (RQRDDSFGKENHS) show a composition bias toward basic and acidic residues. Basic residues predominate over residues 325–336 (QHTRRSQGRIHL).

This sequence belongs to the MTFR1 family.

Its subcellular location is the mitochondrion. Functionally, may play a role in mitochondrial aerobic respiration. Can also promote mitochondrial fission. In Danio rerio (Zebrafish), this protein is Mitochondrial fission regulator 2 (mtfr2).